A 707-amino-acid chain; its full sequence is MSSKATQDPEAVLAEQSDDATEAGLRRQWQELADEVRDHQFRYYVRDAPIITDAEFDAMLRRLEALEEAHPELRTPDSPTQLVGGAGFATDFTAAEHLERMLSLDNVFTPDELAAWAARIRTEIGADAQYLCELKIDGVALSLVYRDGRLERGATRGDGRTGEDVTLNARTIEDVPEKLTGTEEFPLPSVLEVRGEVFFRIADFEDLNAGLVAEGKPPFANPRNSAAGSLRQKNPAVTARRRLRMICHGLGHIEDAAGFPFRTLHDAYRALQAWGLPVSPHTAQVTGLDAVTERIAYWGEHRHDVEHEIDGVVVKVDEVALQRRLGATSRAPRWAVAYKYPPEEAQTKLLDIRVNVGRTGRVTPFAYMEPVKIAGSTVGLATLHNGSEVKRKGVLIGDTVVIRKAGDVIPEVLGPVVDLRDGSEREFVMPTHCPECGTELAPAKEGDADIRCPNSRTCPAQLRERVFHVAGRGAFDIEGLGYEAAIALLQARVITDEGDLFTLTADDLLRTDLFTTKAGELSANGKRLLTNLGKAKAQPLWRVLVALSIRHVGPTAARALATEFGSLDAIVAASEEELAAVEGVGPTIAAAVTDWFTVDWHRTIVDKWRAAGVRMADERDASIERTLDGLSIVVTGSLTGYSRDEAKEAIIARGGKAAGSVSKKTAYVVAGDSPGSKYDKAIELGVPVLDEDGFRRLLENGPDTPDS.

The tract at residues 1–23 (MSSKATQDPEAVLAEQSDDATEA) is disordered. NAD(+)-binding positions include 53–57 (DAEFD), 103–104 (SL), and Glu-133. Residue Lys-135 is the N6-AMP-lysine intermediate of the active site. The NAD(+) site is built by Arg-156, Glu-196, Lys-315, and Lys-339. Zn(2+) contacts are provided by Cys-433, Cys-436, Cys-452, and Cys-458. Positions 622–707 (SIERTLDGLS…LENGPDTPDS (86 aa)) constitute a BRCT domain.

Belongs to the NAD-dependent DNA ligase family. LigA subfamily. It depends on Mg(2+) as a cofactor. Mn(2+) is required as a cofactor.

It catalyses the reaction NAD(+) + (deoxyribonucleotide)n-3'-hydroxyl + 5'-phospho-(deoxyribonucleotide)m = (deoxyribonucleotide)n+m + AMP + beta-nicotinamide D-nucleotide.. DNA ligase that catalyzes the formation of phosphodiester linkages between 5'-phosphoryl and 3'-hydroxyl groups in double-stranded DNA using NAD as a coenzyme and as the energy source for the reaction. It is essential for DNA replication and repair of damaged DNA. This chain is DNA ligase, found in Mycolicibacterium vanbaalenii (strain DSM 7251 / JCM 13017 / BCRC 16820 / KCTC 9966 / NRRL B-24157 / PYR-1) (Mycobacterium vanbaalenii).